We begin with the raw amino-acid sequence, 327 residues long: D-alanine--D-alanine ligase (327 aa).

One can recognise an ATP-grasp domain in the interval 113–312 (KRLWMTYGLA…YEDFVMQVVA (200 aa)). Position 139-194 (139-194 (AADLGLPLIVKPAREGSSIGLTKVTAADQMRAAFEKAAALDNDVIAETFIDGAELT)) interacts with ATP. Mg(2+) contacts are provided by aspartate 266, glutamate 279, and asparagine 281.

Belongs to the D-alanine--D-alanine ligase family. Requires Mg(2+) as cofactor. It depends on Mn(2+) as a cofactor.

The protein localises to the cytoplasm. The enzyme catalyses 2 D-alanine + ATP = D-alanyl-D-alanine + ADP + phosphate + H(+). The protein operates within cell wall biogenesis; peptidoglycan biosynthesis. In terms of biological role, cell wall formation. The sequence is that of D-alanine--D-alanine ligase from Cupriavidus necator (strain ATCC 17699 / DSM 428 / KCTC 22496 / NCIMB 10442 / H16 / Stanier 337) (Ralstonia eutropha).